The sequence spans 1316 residues: DNA-directed RNA polymerase subunit beta' (1316 aa).

Zn(2+) contacts are provided by C60, C62, C75, and C78. Mg(2+) contacts are provided by D535, D537, and D539. Residues C891, C968, C975, and C978 each coordinate Zn(2+).

Belongs to the RNA polymerase beta' chain family. The RNAP catalytic core consists of 2 alpha, 1 beta, 1 beta' and 1 omega subunit. When a sigma factor is associated with the core the holoenzyme is formed, which can initiate transcription. Mg(2+) is required as a cofactor. The cofactor is Zn(2+).

It carries out the reaction RNA(n) + a ribonucleoside 5'-triphosphate = RNA(n+1) + diphosphate. Functionally, DNA-dependent RNA polymerase catalyzes the transcription of DNA into RNA using the four ribonucleoside triphosphates as substrates. The chain is DNA-directed RNA polymerase subunit beta' from Mycobacterium tuberculosis (strain CDC 1551 / Oshkosh).